Consider the following 197-residue polypeptide: A-type ATP synthase subunit E (197 aa).

This sequence belongs to the V-ATPase E subunit family. As to quaternary structure, has multiple subunits with at least A(3), B(3), C, D, E, F, H, I and proteolipid K(x).

The protein resides in the cell membrane. Functionally, component of the A-type ATP synthase that produces ATP from ADP in the presence of a proton gradient across the membrane. This Thermococcus gammatolerans (strain DSM 15229 / JCM 11827 / EJ3) protein is A-type ATP synthase subunit E.